We begin with the raw amino-acid sequence, 307 residues long: Elongation factor Ts (307 aa).

An involved in Mg(2+) ion dislocation from EF-Tu region spans residues 80–83; it reads TDFV.

The protein belongs to the EF-Ts family.

Its subcellular location is the cytoplasm. Associates with the EF-Tu.GDP complex and induces the exchange of GDP to GTP. It remains bound to the aminoacyl-tRNA.EF-Tu.GTP complex up to the GTP hydrolysis stage on the ribosome. This chain is Elongation factor Ts, found in Azorhizobium caulinodans (strain ATCC 43989 / DSM 5975 / JCM 20966 / LMG 6465 / NBRC 14845 / NCIMB 13405 / ORS 571).